Consider the following 1369-residue polypeptide: DNA-directed RNA polymerase subunit beta' (1369 aa).

The interval Met1–Ala26 is disordered. Residues Lys7 to Lys24 are compositionally biased toward basic residues. 4 residues coordinate Zn(2+): Cys253, Cys320, Cys327, and Cys330. The tract at residues Thr1294–Glu1369 is disordered. Residues Asp1342–Met1351 are compositionally biased toward acidic residues. Over residues Leu1357–Glu1369 the composition is skewed to low complexity.

Belongs to the RNA polymerase beta' chain family. RpoC2 subfamily. In terms of assembly, in cyanobacteria the RNAP catalytic core is composed of 2 alpha, 1 beta, 1 beta', 1 gamma and 1 omega subunit. When a sigma factor is associated with the core the holoenzyme is formed, which can initiate transcription. Zn(2+) serves as cofactor.

It catalyses the reaction RNA(n) + a ribonucleoside 5'-triphosphate = RNA(n+1) + diphosphate. Functionally, DNA-dependent RNA polymerase catalyzes the transcription of DNA into RNA using the four ribonucleoside triphosphates as substrates. In Prochlorococcus marinus (strain NATL2A), this protein is DNA-directed RNA polymerase subunit beta'.